The sequence spans 80 residues: MAKNLNSVSFIVLLLVLLVASTEILKSDAACFTFLGECGPEPFTGSNADCLACCVALYKSPPVCAGRVEGVPAHCHCYKS.

The N-terminal stretch at 1–29 (MAKNLNSVSFIVLLLVLLVASTEILKSDA) is a signal peptide. Cystine bridges form between C38–C64, C50–C75, and C54–C77.

Belongs to the DEFL family.

The protein localises to the secreted. The polypeptide is Defensin-like protein 207 (Arabidopsis thaliana (Mouse-ear cress)).